Reading from the N-terminus, the 133-residue chain is Nickel-responsive regulator (133 aa).

Ni(2+) is bound by residues His76, His87, His89, and Cys95.

This sequence belongs to the transcriptional regulatory CopG/NikR family. In terms of assembly, homotetramer. The cofactor is Ni(2+).

Transcriptional repressor of the nikABCDE operon. Is active in the presence of excessive concentrations of intracellular nickel. This chain is Nickel-responsive regulator, found in Salmonella choleraesuis (strain SC-B67).